Here is a 1444-residue protein sequence, read N- to C-terminus: Probable chitinase LysM18 (1444 aa).

2 LysM domains span residues 256–302 (STVQ…HFCC) and 321–369 (TTYT…IICL). The 69-residue stretch at 382–450 (NAECGPQVPG…TNGCISNCGT (69 aa)) folds into the Chitin-binding type-1 domain. Disulfide bonds link Cys385–Cys413, Cys407–Cys419, Cys412–Cys426, and Cys444–Cys448. The region spanning 461–831 (YRKVGFYEGF…STSWTKFTSD (371 aa)) is the GH18 domain. Catalysis depends on Glu582, which acts as the Proton donor. Positions 583 and 808 each coordinate chitin.

Belongs to the glycosyl hydrolase 18 family. Chitinase class V subfamily.

The enzyme catalyses Random endo-hydrolysis of N-acetyl-beta-D-glucosaminide (1-&gt;4)-beta-linkages in chitin and chitodextrins.. Probable chitinase involved in the degradation of chitin, a component of the cell walls of fungi and exoskeletal elements of some animals (including worms and arthropods). Might be involved in manipulation of host defenses for successful infection. This Penicillium expansum (Blue mold rot fungus) protein is Probable chitinase LysM18.